A 303-amino-acid polypeptide reads, in one-letter code: MSHISVLLHETVDALLANRDTGIYIDGTFGRGGHTRLLLSKLGSDAQVYGFDKDPQALAVAHQLEQEDLRFKIIHASFADIQTELEQRGITQVEGVMADLGVSSPQLDQAERGFSFMQDGPLDMRMDNSQGKTAAEWLLSIEEEALANIIYQYGEERYSRRIARAIKQAGALETTAQLAELVKTAHPKWEKHKHPATRTFQAIRIAINKELEDIEIFLPQAVTLLKPEGRLAVITFHSLEDRLIKQFIQKESTLPEDSGWGLPQKQVDSRRLKKISRIRASEEEVKANPRSRSAWLRVAERLV.

Residues Gly-32 to His-34, Asp-52, Phe-78, Asp-99, and Gln-106 each bind S-adenosyl-L-methionine.

Belongs to the methyltransferase superfamily. RsmH family.

Its subcellular location is the cytoplasm. It carries out the reaction cytidine(1402) in 16S rRNA + S-adenosyl-L-methionine = N(4)-methylcytidine(1402) in 16S rRNA + S-adenosyl-L-homocysteine + H(+). Its function is as follows. Specifically methylates the N4 position of cytidine in position 1402 (C1402) of 16S rRNA. This chain is Ribosomal RNA small subunit methyltransferase H, found in Acinetobacter baylyi (strain ATCC 33305 / BD413 / ADP1).